We begin with the raw amino-acid sequence, 755 residues long: Photosystem I P700 chlorophyll a apoprotein A1 (755 aa).

Helical transmembrane passes span 72–95, 158–181, 197–221, 297–315, 352–375, 391–417, 439–461, and 536–554; these read IFSAHFGHLAVVFVWLSGMYYHGA, LLCTAIGGLVMAGLCLFAGWFHYH, LNHHLAGLLGLGSLAWAGHQIHVAI, QAHHHLAIAVLFIVAGHMY, WHAQLAINLAMVGSLSIIVAQHMY, ISLFTHHMWIGGFFVVGGAAHGAIYMV, AIISHLNWVCLFLGFHAFGFYVH, and FMVHHIHAMTIHITVLILL. [4Fe-4S] cluster-binding residues include C578 and C587. A run of 2 helical transmembrane segments spans residues 594 to 615 and 669 to 691; these read HVFLGLFWMYNCISIVIFHFSW and LSAYGLLFLGAHFVWAFSLMFLF. H680 is a chlorophyll a' binding site. 2 residues coordinate chlorophyll a: M688 and Y696. W697 is a binding site for phylloquinone. A helical membrane pass occupies residues 729 to 749; it reads AVGVAHYLLGGIVTTWAFFLA.

This sequence belongs to the PsaA/PsaB family. In terms of assembly, the PsaA/B heterodimer binds the P700 chlorophyll special pair and subsequent electron acceptors. PSI consists of a core antenna complex that captures photons, and an electron transfer chain that converts photonic excitation into a charge separation. The cyanobacterial PSI reaction center is composed of one copy each of PsaA,B,C,D,E,F,I,J,K,L,M and X, and forms trimeric complexes. It depends on PSI electron transfer chain: 5 chlorophyll a, 1 chlorophyll a', 2 phylloquinones and 3 4Fe-4S clusters. PSI core antenna: 90 chlorophyll a, 22 carotenoids, 3 phospholipids and 1 galactolipid. P700 is a chlorophyll a/chlorophyll a' dimer, A0 is one or more chlorophyll a, A1 is one or both phylloquinones and FX is a shared 4Fe-4S iron-sulfur center. as a cofactor.

The protein resides in the cellular thylakoid membrane. The enzyme catalyses reduced [plastocyanin] + hnu + oxidized [2Fe-2S]-[ferredoxin] = oxidized [plastocyanin] + reduced [2Fe-2S]-[ferredoxin]. PsaA and PsaB bind P700, the primary electron donor of photosystem I (PSI), as well as the electron acceptors A0, A1 and FX. PSI is a plastocyanin/cytochrome c6-ferredoxin oxidoreductase, converting photonic excitation into a charge separation, which transfers an electron from the donor P700 chlorophyll pair to the spectroscopically characterized acceptors A0, A1, FX, FA and FB in turn. Oxidized P700 is reduced on the lumenal side of the thylakoid membrane by plastocyanin or cytochrome c6. In Synechococcus sp. (strain JA-2-3B'a(2-13)) (Cyanobacteria bacterium Yellowstone B-Prime), this protein is Photosystem I P700 chlorophyll a apoprotein A1.